The chain runs to 62 residues: Calmodulin regulator protein PCP4 (62 aa).

A disordered region spans residues 1–40 (MSERQGAGTTNGKDKPSGENDGQKKVQEEFDIDMDAPETE). Positions 12–28 (GKDKPSGENDGQKKVQE) are enriched in basic and acidic residues. An acidic; binds calcium and is required for modulating the calcium-binding kinetics of calmodulin region spans residues 28–40 (EEFDIDMDAPETE). Positions 39 to 62 (TERAAVAIQSQFRKFQKKKAGSQS) constitute an IQ domain.

This sequence belongs to the PCP4 family. In terms of assembly, binds to both calcium-free and calcium-bound calmodulin. The affinity for the calcium-bound form is 50-fold greater.

Functions as a modulator of calcium-binding by calmodulin. Thereby, regulates calmodulin activity and the different processes it controls. For instance, may play a role in neuronal differentiation through activation of calmodulin-dependent kinase signaling pathways. The polypeptide is Calmodulin regulator protein PCP4 (Bos taurus (Bovine)).